A 346-amino-acid polypeptide reads, in one-letter code: Annexin A1 (346 aa).

Ala-2 carries the post-translational modification N-acetylalanine. Ser-5 is subject to Phosphoserine; by TRPM7. Gln-19 participates in a covalent cross-link: Isoglutamyl lysine isopeptide (Gln-Lys) (interchain with K-?). Position 21 is a phosphotyrosine (Tyr-21). Phosphoserine; by PKC is present on Ser-27. A phosphoserine mark is found at Ser-34 and Ser-37. Annexin repeat units lie at residues 42–113, 114–185, 197–269, and 273–344; these read FNVS…AMLK, TPAQ…ALAK, DLAD…TIVK, and STPA…ALCG. Lys-58 carries the post-translational modification N6-acetyllysine. Ca(2+) contacts are provided by Gly-59, Val-60, Glu-62, Arg-97, Leu-100, Glu-105, Met-127, Gly-129, Gly-131, Thr-132, and Glu-134. Thr-136 carries the post-translational modification Phosphothreonine. Ca(2+)-binding residues include Asp-171, Gly-210, and Arg-213. A Glycyl lysine isopeptide (Lys-Gly) (interchain with G-Cter in SUMO1); alternate cross-link involves residue Lys-214. Residue Lys-214 forms a Glycyl lysine isopeptide (Lys-Gly) (interchain with G-Cter in SUMO2); alternate linkage. The Ca(2+) site is built by Gly-215, Asp-253, Glu-255, and Leu-256. Lys-257 participates in a covalent cross-link: Glycyl lysine isopeptide (Lys-Gly) (interchain with G-Cter in SUMO1). Ca(2+) contacts are provided by Glu-261, Met-286, Gly-288, and Gly-290. Position 312 is an N6-acetyllysine (Lys-312). Cys-324 and Cys-343 are joined by a disulfide. Residues Leu-328, Glu-330, and Thr-331 each coordinate Ca(2+). Residue Lys-332 forms a Glycyl lysine isopeptide (Lys-Gly) (interchain with G-Cter in SUMO1) linkage. A Ca(2+)-binding site is contributed by Glu-336.

This sequence belongs to the annexin family. As to quaternary structure, homodimer; non-covalently linked. Homodimer; linked by transglutamylation. Homodimers linked by transglutamylation are observed in placenta, but not in other tissues. Interacts with S100A11. Heterotetramer, formed by two molecules each of S100A11 and ANXA1. Interacts with DYSF. Interacts with EGFR. Phosphorylated by protein kinase C, EGFR and TRPM7. Phosphorylated in response to EGF treatment. In terms of processing, sumoylated. Post-translationally, proteolytically cleaved by cathepsin CTSG to release the active N-terminal peptide Ac2-26. As to expression, detected in lung. Detected at the apical membrane of airway epithelial cells. Detected in intestinal epithelial cells. Detected in skeletal muscle. Detected in prostate. Detected in thymus (at protein level). Detected in stomach, lung, spleen, ovary and uterus, and at lower levels in kidney, thymus and heart.

The protein localises to the nucleus. The protein resides in the cytoplasm. Its subcellular location is the cell projection. It localises to the cilium. It is found in the basolateral cell membrane. The protein localises to the lateral cell membrane. The protein resides in the cell membrane. Its subcellular location is the apical cell membrane. It localises to the membrane. It is found in the early endosome. The protein localises to the cytoplasmic vesicle membrane. The protein resides in the endosome membrane. Its subcellular location is the secreted. It localises to the extracellular space. It is found in the extracellular exosome. The protein localises to the cytoplasmic vesicle. The protein resides in the secretory vesicle lumen. Its subcellular location is the phagocytic cup. In terms of biological role, plays important roles in the innate immune response as effector of glucocorticoid-mediated responses and regulator of the inflammatory process. Has anti-inflammatory activity. Plays a role in glucocorticoid-mediated down-regulation of the early phase of the inflammatory response. Contributes to the adaptive immune response by enhancing signaling cascades that are triggered by T-cell activation, regulates differentiation and proliferation of activated T-cells. Promotes the differentiation of T-cells into Th1 cells and negatively regulates differentiation into Th2 cells. Has no effect on unstimulated T-cells. Negatively regulates hormone exocytosis via activation of the formyl peptide receptors and reorganization of the actin cytoskeleton. Has high affinity for Ca(2+) and can bind up to eight Ca(2+) ions. Displays Ca(2+)-dependent binding to phospholipid membranes. Plays a role in the formation of phagocytic cups and phagosomes. Plays a role in phagocytosis by mediating the Ca(2+)-dependent interaction between phagosomes and the actin cytoskeleton. Functionally, functions at least in part by activating the formyl peptide receptors and downstream signaling cascades. Promotes chemotaxis of granulocytes and monocytes via activation of the formyl peptide receptors. Promotes rearrangement of the actin cytoskeleton, cell polarization and cell migration. Promotes resolution of inflammation and wound healing. Acts via neutrophil N-formyl peptide receptors to enhance the release of CXCL2. The chain is Annexin A1 (Anxa1) from Mus musculus (Mouse).